The primary structure comprises 509 residues: Maturase K (509 aa).

This sequence belongs to the intron maturase 2 family. MatK subfamily.

The protein localises to the plastid. It localises to the chloroplast. Functionally, usually encoded in the trnK tRNA gene intron. Probably assists in splicing its own and other chloroplast group II introns. This Anthocercis viscosa (Sticky tailflower) protein is Maturase K.